We begin with the raw amino-acid sequence, 306 residues long: UDP-N-acetylenolpyruvoylglucosamine reductase (306 aa).

One can recognise an FAD-binding PCMH-type domain in the interval 25–188 (RVGGPADWLF…IEARFRAEPG (164 aa)). Arg168 is a catalytic residue. Over residues 199–214 (EQLARRDASQPTKDRS) the composition is skewed to basic and acidic residues. Residues 199 to 232 (EQLARRDASQPTKDRSAGSTFRNPAGYSSTGRAD) form a disordered region. The segment covering 215-229 (AGSTFRNPAGYSSTG) has biased composition (polar residues). Ser217 functions as the Proton donor in the catalytic mechanism. Glu299 is an active-site residue.

This sequence belongs to the MurB family. FAD is required as a cofactor.

The protein resides in the cytoplasm. The catalysed reaction is UDP-N-acetyl-alpha-D-muramate + NADP(+) = UDP-N-acetyl-3-O-(1-carboxyvinyl)-alpha-D-glucosamine + NADPH + H(+). Its pathway is cell wall biogenesis; peptidoglycan biosynthesis. In terms of biological role, cell wall formation. This Paracoccus denitrificans (strain Pd 1222) protein is UDP-N-acetylenolpyruvoylglucosamine reductase.